The chain runs to 51 residues: Cytochrome b559 subunit beta (51 aa).

A helical membrane pass occupies residues 26–42; the sequence is WLAVHALTVPTIFFLGA. His-30 contacts heme.

The protein belongs to the PsbE/PsbF family. In terms of assembly, heterodimer of an alpha subunit and a beta subunit. PSII is composed of 1 copy each of membrane proteins PsbA, PsbB, PsbC, PsbD, PsbE, PsbF, PsbH, PsbI, PsbJ, PsbK, PsbL, PsbM, PsbT, PsbX, Psb30/Ycf12, peripheral proteins PsbO, CyanoQ (PsbQ), PsbU, PsbV and a large number of cofactors. It forms dimeric complexes. It depends on heme b as a cofactor.

It localises to the cell inner membrane. Functionally, this b-type cytochrome is tightly associated with the reaction center of photosystem II (PSII). PSII is a light-driven water:plastoquinone oxidoreductase that uses light energy to abstract electrons from H(2)O, generating O(2) and a proton gradient subsequently used for ATP formation. It consists of a core antenna complex that captures photons, and an electron transfer chain that converts photonic excitation into a charge separation. This Gloeobacter violaceus (strain ATCC 29082 / PCC 7421) protein is Cytochrome b559 subunit beta.